The primary structure comprises 76 residues: Protein krueppel (76 aa).

2 C2H2-type zinc fingers span residues 11-33 (FECSECHKRFTRDHHLKTHLRLH) and 39-61 (YSCPHCPRHFVQVANLRRHLRVH).

The protein belongs to the krueppel C2H2-type zinc-finger protein family.

Its subcellular location is the nucleus. Its function is as follows. Krueppel is a gap class segmentation protein. In Manduca sexta (Tobacco hawkmoth), this protein is Protein krueppel (Kr).